Here is a 36-residue protein sequence, read N- to C-terminus: Photosystem I reaction center subunit VIII (36 aa).

A helical transmembrane segment spans residues 6 to 28 (LPSIFVPLVGLLFPAIAMVSLFF).

Belongs to the PsaI family.

The protein localises to the plastid. It localises to the chloroplast thylakoid membrane. Functionally, may help in the organization of the PsaL subunit. The protein is Photosystem I reaction center subunit VIII of Nymphaea alba (White water-lily).